The following is a 101-amino-acid chain: MATIANPRDIIIAPVVSEKSYGLMEQNVYTFFVSTDANKTQIKIAIEEIFGVKVASVNTVNRAGKRKRSRTGFGTRKATKRAYVTLREGSDSIDIFNGSVA.

The protein belongs to the universal ribosomal protein uL23 family. Part of the 50S ribosomal subunit. Contacts protein L29, and trigger factor when it is bound to the ribosome.

In terms of biological role, one of the early assembly proteins it binds 23S rRNA. One of the proteins that surrounds the polypeptide exit tunnel on the outside of the ribosome. Forms the main docking site for trigger factor binding to the ribosome. This chain is Large ribosomal subunit protein uL23, found in Corynebacterium glutamicum (strain R).